The primary structure comprises 512 residues: Cytochrome P450 monooxygenase hkm5 (512 aa).

Residues 18–38 (LIQLVRALLWVLVITIGGAIV) traverse the membrane as a helical segment. Asn-184, Asn-263, Asn-275, Asn-374, and Asn-419 each carry an N-linked (GlcNAc...) asparagine glycan. Cys-456 contacts heme.

Belongs to the cytochrome P450 family. The cofactor is heme.

Its subcellular location is the membrane. The catalysed reaction is hancockiamide A + reduced [NADPH--hemoprotein reductase] + O2 = hancockiamide G + oxidized [NADPH--hemoprotein reductase] + 2 H2O + H(+). It carries out the reaction hancockiamide B + reduced [NADPH--hemoprotein reductase] + O2 = hancockiamide C + oxidized [NADPH--hemoprotein reductase] + 2 H2O + H(+). The enzyme catalyses hancockiamide D + reduced [NADPH--hemoprotein reductase] + O2 = hancockiamide H + oxidized [NADPH--hemoprotein reductase] + 2 H2O + H(+). Its pathway is secondary metabolite biosynthesis. Cytochrome P450 monooxygenase; part of the gene cluster that mediates the biosynthesis of hancockiamides, an unusual new family of N-cinnamoylated piperazines. The NRPS hkm10 and the NmrA-like reductase hkm9 are proposed to convert two molecules of L-Phe to the intermediary piperazine called xenocockiamide A. Xenocockiamide A is then converted to hancockiamide D via a series of hydroxylations and O-methylations. The tyrosinase hkm6 may catalyze an aromatic hydroxylation, then the 2-oxoglutarate-dependent Fe(II) dioxygenase hkm4 and the FAD-dependent phenol hydroxylase hkm7 may catalyze consecutive hydroxylations to install 2 more hydroxy groups, and the methyltransferase hkm8 probably catalyzes two methylations using 2 molecules of S-adenosyl-L-methionine (SAM). The NRPS hkm11 activates and transfers trans-cinnamate supplied by the PAL hkm12 to hancockiamide D and produces hancockiamide A. NRPS Hkm11 has the flexibility to tolerate the bulky hancockiamide G as a substrate and the absence of the acetyl-transferase hkm3 opens up the opportunity for hkm11 to introduce a second N-cinnamoyl moiety. The cytochrome P450 monooxygenase hkm5 catalyzes the methylenedioxy bridge formation, converting hancockiamide A into hancockiamide G. Hkm5 can also convert hancockiamide B into hancockiamide C, and hancockiamide D into hancockiamide H. The N-acetyltransferase hkm3 finally transfers an acetyl group to 1-N of piperazine, converting hancockiamide A into hancockiamide B and hancockiamide G into hancockiamide C. The protein is Cytochrome P450 monooxygenase hkm5 of Aspergillus hancockii.